The primary structure comprises 339 residues: Spore coat polysaccharide biosynthesis protein SpsG (339 aa).

The helical transmembrane segment at 241-261 (IVAGGISLYEAICIGVPCLVL) threads the bilayer.

The protein to M.jannaschii MJ1062.

It localises to the cell membrane. The protein operates within spore coat biogenesis; spore coat polysaccharide biosynthesis. The polypeptide is Spore coat polysaccharide biosynthesis protein SpsG (spsG) (Bacillus subtilis (strain 168)).